We begin with the raw amino-acid sequence, 95 residues long: TBK1 inhibitor DP96R (95 aa).

Belongs to the asfivirus DP96R family.

Functionally, inhibits cGAS-STING-mediated type I IFN expression and NF-kB activation by inhibiting TBK1 and IKBKB/IKKB. Inhibits host TBK1 phosphorylation. The polypeptide is TBK1 inhibitor DP96R (Ornithodoros (relapsing fever ticks)).